A 106-amino-acid chain; its full sequence is UPF0145 protein CPF_0876 (106 aa).

The protein belongs to the UPF0145 family.

The polypeptide is UPF0145 protein CPF_0876 (Clostridium perfringens (strain ATCC 13124 / DSM 756 / JCM 1290 / NCIMB 6125 / NCTC 8237 / Type A)).